Consider the following 412-residue polypeptide: 1-deoxy-D-xylulose 5-phosphate reductoisomerase (412 aa).

NADPH contacts are provided by T10, G11, S12, I13, G36, K37, N38, and N130. Residue K131 participates in 1-deoxy-D-xylulose 5-phosphate binding. E132 serves as a coordination point for NADPH. Position 156 (D156) interacts with Mn(2+). 4 residues coordinate 1-deoxy-D-xylulose 5-phosphate: S157, E158, S194, and H217. E158 contributes to the Mn(2+) binding site. G223 is an NADPH binding site. 4 residues coordinate 1-deoxy-D-xylulose 5-phosphate: S230, N235, K236, and E239. A Mn(2+)-binding site is contributed by E239.

Belongs to the DXR family. It depends on Mg(2+) as a cofactor. Mn(2+) serves as cofactor.

It carries out the reaction 2-C-methyl-D-erythritol 4-phosphate + NADP(+) = 1-deoxy-D-xylulose 5-phosphate + NADPH + H(+). Its pathway is isoprenoid biosynthesis; isopentenyl diphosphate biosynthesis via DXP pathway; isopentenyl diphosphate from 1-deoxy-D-xylulose 5-phosphate: step 1/6. Functionally, catalyzes the NADPH-dependent rearrangement and reduction of 1-deoxy-D-xylulose-5-phosphate (DXP) to 2-C-methyl-D-erythritol 4-phosphate (MEP). The protein is 1-deoxy-D-xylulose 5-phosphate reductoisomerase of Prochlorococcus marinus (strain NATL2A).